The sequence spans 244 residues: DnaJ homolog subfamily C member 4 (244 aa).

The J domain occupies 37–102; sequence NYYELLGVHP…ESRRNYDHQL (66 aa). A disordered region spans residues 96–127; that stretch reads RNYDHQLHSASPPKSSGSTAEPKYTQQTHSSW. Residues 103–127 show a composition bias toward polar residues; that stretch reads HSASPPKSSGSTAEPKYTQQTHSSW. The chain crosses the membrane as a helical span at residues 159–178; the sequence is VLGYCLLLMVAGMGLHYVAF. Residues 208–244 form a disordered region; the sequence is RANRARIQQERQQRQQPRAEPSLPPESSRIMPQDTSP.

The protein resides in the membrane. The chain is DnaJ homolog subfamily C member 4 (Dnajc4) from Mus musculus (Mouse).